The following is a 215-amino-acid chain: Cytochrome b6 (215 aa).

Residues 32-52 (IFYCLGGITLTCFLVQVATGF) traverse the membrane as a helical segment. Cys35 serves as a coordination point for heme c. Residues His86 and His100 each coordinate heme b. The next 3 helical transmembrane spans lie at 90–110 (ASMM…TGGF), 116–136 (LTWV…VTGY), and 186–206 (LHTF…FLMI). Positions 187 and 202 each coordinate heme b.

The protein belongs to the cytochrome b family. PetB subfamily. The 4 large subunits of the cytochrome b6-f complex are cytochrome b6, subunit IV (17 kDa polypeptide, PetD), cytochrome f and the Rieske protein, while the 4 small subunits are PetG, PetL, PetM and PetN. The complex functions as a dimer. Requires heme b as cofactor. Heme c is required as a cofactor.

The protein localises to the plastid. The protein resides in the chloroplast thylakoid membrane. Functionally, component of the cytochrome b6-f complex, which mediates electron transfer between photosystem II (PSII) and photosystem I (PSI), cyclic electron flow around PSI, and state transitions. The chain is Cytochrome b6 from Welwitschia mirabilis (Tree tumbo).